We begin with the raw amino-acid sequence, 51 residues long: Magnetosome protein Mms5 (51 aa).

The Lumenal segment spans residues 1–12 (MLSAKGVSLGLG). The segment at 9–16 (LGLGLGLG) is LG region. The chain crosses the membrane as a helical span at residues 13–33 (LGLGAWGPVLLGVVGVAGAIA). Residues 34 to 51 (LYGYYKNRNAEPAAAEAV) are Cytoplasmic-facing.

Belongs to the magnetosome MamD/Mms5 family. In terms of processing, seen in gels as a band of about 5 kDa, with an N-terminus that corresponds to residue 8, suggesting it may undergo N-terminal cleavage.

The protein resides in the magnetosome membrane. In terms of biological role, might be involved in magnetite crystal growth. In Paramagnetospirillum magneticum (strain ATCC 700264 / AMB-1) (Magnetospirillum magneticum), this protein is Magnetosome protein Mms5.